Consider the following 181-residue polypeptide: Protein GrpE (181 aa).

This sequence belongs to the GrpE family. Homodimer.

It is found in the cytoplasm. Functionally, participates actively in the response to hyperosmotic and heat shock by preventing the aggregation of stress-denatured proteins, in association with DnaK and GrpE. It is the nucleotide exchange factor for DnaK and may function as a thermosensor. Unfolded proteins bind initially to DnaJ; upon interaction with the DnaJ-bound protein, DnaK hydrolyzes its bound ATP, resulting in the formation of a stable complex. GrpE releases ADP from DnaK; ATP binding to DnaK triggers the release of the substrate protein, thus completing the reaction cycle. Several rounds of ATP-dependent interactions between DnaJ, DnaK and GrpE are required for fully efficient folding. The polypeptide is Protein GrpE (Leptothrix cholodnii (strain ATCC 51168 / LMG 8142 / SP-6) (Leptothrix discophora (strain SP-6))).